Consider the following 95-residue polypeptide: Fungal defensin plectasin (95 aa).

An N-terminal signal peptide occupies residues 1–23 (MQFTTILSIGITVFGLLNTGAFA). The propeptide occupies 24–55 (APQPVPEAYAVSDPEAHPDDFAGMDANQLQKR). The beta-D-GlcNAc-(1-&gt;4)-Mur2Ac(oyl-L-Ala-gamma-D-Glu-L-Lys-D-Ala-D-Ala)-di-trans,octa-cis-undecaprenyl diphosphate site is built by Phe-57, Gly-58, and Cys-59. 3 disulfide bridges follow: Cys-59/Cys-85, Cys-70/Cys-92, and Cys-74/Cys-94. Residues 61–64 (GPWD) are binds to membrane interface. 7 residues coordinate beta-D-GlcNAc-(1-&gt;4)-Mur2Ac(oyl-L-Ala-gamma-D-Glu-L-Lys-D-Ala-D-Ala)-di-trans,octa-cis-undecaprenyl diphosphate: Asp-67, His-73, Tyr-84, Ala-86, Gly-88, Cys-92, and Lys-93. The interval 86-92 (AKGGFVC) is binds to membrane interface.

Belongs to the invertebrate defensin family. Type 2 subfamily.

It localises to the secreted. The protein localises to the host cell membrane. In terms of biological role, antimicrobial peptide that potently acts against several species of Gram-positive bacteria. It selectively inhibits peptidoglycan biosynthesis through complex formation with the cell wall precursor lipid II (1:1 molar ratio) thus inhibiting cell wall synthesis. It does not disrupt cell membranes. Is especially active against numerous clinical isolates of S.pneumoniae, including all 90 different serotypes and isolates resistant to clinically used antibiotics. In vitro, shows considerable selectivity for bacteria over mammalian cells. The peptide synthesized in D-amino acids does not show antibacterial activity. In vitro, acts on voltage-gated potassium channels by moderately inhibiting mammalian Kv1.3/KCNA3 (IC(50)=2.8 uM), and moderately inhibiting others potassium channels. This Pseudoplectania nigrella (Ebony cup) protein is Fungal defensin plectasin (DEF).